The sequence spans 340 residues: PI-PLC X domain-containing protein 2 (340 aa).

Residues 42-215 enclose the PI-PLC X-box domain; the sequence is HLHNVPLSNL…KYQVLIFYHC (174 aa). Residues H57 and H132 contribute to the active site.

In terms of tissue distribution, expressed at highest levels in brain, followed by stomach and small intestine. Detected at low levels in kidney, ey, thymus and slkeletal muscle.

The protein resides in the nucleus. It carries out the reaction a 1,2-diacyl-sn-glycero-3-phospho-(1D-myo-inositol) + H2O = 1D-myo-inositol 1-phosphate + a 1,2-diacyl-sn-glycerol + H(+). Catalyzes the hydrolysis of inositol from phosphatidylinositol (1,2-diacyl-sn-glycero-3-phospho-(1D-myo-inositol), PI). Could also hydrolyze various multi-phosphorylated derivatives of PI, such as phosphatidylinositol-4,5 bisphosphate (PIP2), releasing inositol-1,4,5-trisphosphate (IP3) and the protein kinase C activator diacylglycerol (DAG), therefore mediating cell signaling. The sequence is that of PI-PLC X domain-containing protein 2 (Plcxd2) from Mus musculus (Mouse).